The primary structure comprises 413 residues: Serine/threonine transporter SstT (413 aa).

Transmembrane regions (helical) follow at residues 14-34, 44-64, 82-102, 141-161, 178-198, 217-237, 290-310, 330-350, and 356-376; these read GSLVGQILVGLVLGIALASFS, LGTLFVSALKAVAPVLVFILV, IVLLYLLGTFAAALVAVVVSF, ALASGNFIGILAWAIGLGVAL, GVTFIVRVVIRFAPLGIFGLV, LMVLIGAMLLVALVLNPLIVF, IPLGATINMAGAAITITVLTL, LVAAVCACGASGVAGGSLLLI, and LFGISSDIAMQVVAVGFIIGV.

The protein belongs to the dicarboxylate/amino acid:cation symporter (DAACS) (TC 2.A.23) family.

The protein resides in the cell inner membrane. It carries out the reaction L-serine(in) + Na(+)(in) = L-serine(out) + Na(+)(out). The enzyme catalyses L-threonine(in) + Na(+)(in) = L-threonine(out) + Na(+)(out). In terms of biological role, involved in the import of serine and threonine into the cell, with the concomitant import of sodium (symport system). The chain is Serine/threonine transporter SstT from Edwardsiella ictaluri (strain 93-146).